The primary structure comprises 681 residues: Epithelial splicing regulatory protein 1 (681 aa).

3 consecutive RRM domains span residues 225 to 302 (TVVR…KATG), 326 to 406 (VIVR…RSTA), and 445 to 525 (DCIR…QCSA). Ser543 is subject to Phosphoserine. An Omega-N-methylarginine modification is found at Arg582.

It belongs to the ESRP family. In terms of tissue distribution, epithelial cell-specific.

The protein localises to the nucleus. MRNA splicing factor that regulates the formation of epithelial cell-specific isoforms. Specifically regulates the expression of FGFR2-IIIb, an epithelial cell-specific isoform of FGFR2. Also regulates the splicing of CD44, CTNND1, ENAH, 3 transcripts that undergo changes in splicing during the epithelial-to-mesenchymal transition (EMT). Acts by directly binding specific sequences in mRNAs. Binds the GU-rich sequence motifs in the ISE/ISS-3, a cis-element regulatory region present in the mRNA of FGFR2. Regulates splicing and expression of genes involved in inner ear development, auditory hair cell differentiation, and cell fate specification in the cochlear epithelium. This chain is Epithelial splicing regulatory protein 1 (ESRP1), found in Homo sapiens (Human).